Here is a 438-residue protein sequence, read N- to C-terminus: 23S rRNA (uracil(1939)-C(5))-methyltransferase RlmD (438 aa).

One can recognise a TRAM domain in the interval 10-69 (KASVNTKHLSVDVVRLDHNSAGIAFVDKKPVFIEGALPEEQAIIQFIEQKKQYSRAKLIK). Residues Cys82, Cys88, Cys91, and Cys169 each coordinate [4Fe-4S] cluster. Positions 272, 301, 306, 322, 349, and 370 each coordinate S-adenosyl-L-methionine. Catalysis depends on Cys396, which acts as the Nucleophile.

The protein belongs to the class I-like SAM-binding methyltransferase superfamily. RNA M5U methyltransferase family. RlmD subfamily.

It carries out the reaction uridine(1939) in 23S rRNA + S-adenosyl-L-methionine = 5-methyluridine(1939) in 23S rRNA + S-adenosyl-L-homocysteine + H(+). Its function is as follows. Catalyzes the formation of 5-methyl-uridine at position 1939 (m5U1939) in 23S rRNA. The chain is 23S rRNA (uracil(1939)-C(5))-methyltransferase RlmD from Aliivibrio salmonicida (strain LFI1238) (Vibrio salmonicida (strain LFI1238)).